Reading from the N-terminus, the 243-residue chain is Pyridoxine 5'-phosphate synthase (243 aa).

Asn-9 contributes to the 3-amino-2-oxopropyl phosphate binding site. Residue 11–12 (DH) coordinates 1-deoxy-D-xylulose 5-phosphate. Arg-20 is a binding site for 3-amino-2-oxopropyl phosphate. His-45 acts as the Proton acceptor in catalysis. 1-deoxy-D-xylulose 5-phosphate-binding residues include Arg-47 and His-52. Glu-72 functions as the Proton acceptor in the catalytic mechanism. Thr-102 is a 1-deoxy-D-xylulose 5-phosphate binding site. The active-site Proton donor is His-193. 3-amino-2-oxopropyl phosphate contacts are provided by residues Gly-194 and 215-216 (GH).

Belongs to the PNP synthase family. Homooctamer; tetramer of dimers.

Its subcellular location is the cytoplasm. The catalysed reaction is 3-amino-2-oxopropyl phosphate + 1-deoxy-D-xylulose 5-phosphate = pyridoxine 5'-phosphate + phosphate + 2 H2O + H(+). It functions in the pathway cofactor biosynthesis; pyridoxine 5'-phosphate biosynthesis; pyridoxine 5'-phosphate from D-erythrose 4-phosphate: step 5/5. Catalyzes the complicated ring closure reaction between the two acyclic compounds 1-deoxy-D-xylulose-5-phosphate (DXP) and 3-amino-2-oxopropyl phosphate (1-amino-acetone-3-phosphate or AAP) to form pyridoxine 5'-phosphate (PNP) and inorganic phosphate. This chain is Pyridoxine 5'-phosphate synthase, found in Escherichia coli O6:H1 (strain CFT073 / ATCC 700928 / UPEC).